Consider the following 745-residue polypeptide: Prolyl oligopeptidase ophP (745 aa).

Catalysis depends on charge relay system residues Ser580, Asp665, and His701.

Belongs to the peptidase S9A family. Monomer.

It catalyses the reaction Hydrolysis of Pro-|-Xaa &gt;&gt; Ala-|-Xaa in oligopeptides.. It participates in mycotoxin biosynthesis. In terms of biological role, prolyl oligopeptidase; part of the gene cluster that mediates the biosynthesis of omphalotin A, a highly methylated cyclic dodecapeptide with nematodicidal activity. Excises and catalyzes the macrocyclization of the methylated core peptide of OphMA to yield omphalotin A. OphP works in a two-step fashion with an initial cleavage at the N-terminus, followed by a second cleavage at the C-terminus of the core peptide. According to this mechanism, the free N-terminus of the core peptide, generated by the first cleavage, attacks the covalent intermediate of the second cleavage, which results in macrocyclization of the core peptide. In Omphalotus olearius (Jack o'lantern), this protein is Prolyl oligopeptidase ophP.